We begin with the raw amino-acid sequence, 700 residues long: uncharacterized protein (700 aa).

The next 9 helical transmembrane spans lie at 24–44 (VLCL…GLLF), 67–87 (LIIG…LLAK), 89–109 (VPLP…AELG), 115–135 (LLPA…YMPV), 139–159 (LLIY…WFWI), 383–403 (LMGT…VLLV), 420–440 (VGTV…IPEG), 461–481 (YGWA…LLWL), and 491–511 (LIDT…LWPQ).

Belongs to the YccS/YhfK family.

It is found in the cell membrane. This is an uncharacterized protein from Escherichia coli (strain K12).